Reading from the N-terminus, the 388-residue chain is Fetuin-B (388 aa).

An N-terminal signal peptide occupies residues 1-18 (MGLLRLLVLCTLAACCMA). 2 consecutive Cystatin fetuin-B-type domains span residues 28–141 (QRPL…YNCT) and 152–264 (TTCP…VTCE). Asparagine 40 is a glycosylation site (N-linked (GlcNAc...) asparagine). 5 disulfides stabilise this stretch: cysteine 96-cysteine 107, cysteine 120-cysteine 140, cysteine 154-cysteine 157, cysteine 217-cysteine 224, and cysteine 237-cysteine 263. A glycan (N-linked (GlcNAc...) asparagine) is linked at asparagine 139. Disordered regions lie at residues 270–343 (AQVP…PQGD) and 367–388 (KEQRSAECPGPEKENNPLVLPP). Residues 279–300 (AVTQGPQKLPQKNTAPTSSPSV) are compositionally biased toward polar residues. O-linked (GalNAc...) threonine glycosylation is found at threonine 292 and threonine 295. Phosphoserine is present on serine 321. The segment covering 367-381 (KEQRSAECPGPEKEN) has biased composition (basic and acidic residues).

It belongs to the fetuin family. Liver, lung and tongue.

Its subcellular location is the secreted. Its function is as follows. Protease inhibitor required for egg fertilization. Required to prevent premature zona pellucida hardening before fertilization, probably by inhibiting the protease activity of ASTL, a protease that mediates the cleavage of ZP2 and triggers zona pellucida hardening. This Mus musculus (Mouse) protein is Fetuin-B (Fetub).